Here is a 215-residue protein sequence, read N- to C-terminus: FBD domain-containing protein At3g58975 (215 aa).

Residues 122-199 form the FBD domain; that stretch reads RSLTSCPVKK…KLSSCNVQLL (78 aa).

The chain is FBD domain-containing protein At3g58975 from Arabidopsis thaliana (Mouse-ear cress).